We begin with the raw amino-acid sequence, 88 residues long: Beta-insect excitatory toxin BmKIT1 (88 aa).

Residues 1–18 (MKFFLIFLVIFPIMGVLG) form the signal peptide. One can recognise an LCN-type CS-alpha/beta domain in the interval 20–83 (KNGYAVDSSG…IKDATKSYCD (64 aa)). Disulfide bonds link Cys34–Cys55, Cys40–Cys60, Cys44–Cys62, and Cys56–Cys82. Position 87 is an isoleucine amide (Ile87).

It belongs to the long (4 C-C) scorpion toxin superfamily. Sodium channel inhibitor family. Beta subfamily. In terms of tissue distribution, expressed by the venom gland.

The protein resides in the secreted. Functionally, excitatory insect beta-toxins induce a spastic paralysis. They bind voltage-independently at site-4 of sodium channels (Nav) and shift the voltage of activation toward more negative potentials thereby affecting sodium channel activation and promoting spontaneous and repetitive firing. This toxin is active only on insects. The polypeptide is Beta-insect excitatory toxin BmKIT1 (Olivierus martensii (Manchurian scorpion)).